The chain runs to 147 residues: MTSSDVIPASTTSSSGWIASVGSAAGWVWDGMKVTGSVFNDYGTSTTRNTVCTTATVAGGFLGGWSGGAIGSAVGTLILPGIGTAVGSFLGGASAALVAGKATIVVTDRVLDTISYDIETVSCEKCGRGFRCKLYKEGRDKLCYRCK.

This is an uncharacterized protein from Caenorhabditis elegans.